We begin with the raw amino-acid sequence, 336 residues long: Tetraacyldisaccharide 4'-kinase (336 aa).

58 to 65 lines the ATP pocket; the sequence is AVGGSGKT.

Belongs to the LpxK family.

It carries out the reaction a lipid A disaccharide + ATP = a lipid IVA + ADP + H(+). Its pathway is glycolipid biosynthesis; lipid IV(A) biosynthesis; lipid IV(A) from (3R)-3-hydroxytetradecanoyl-[acyl-carrier-protein] and UDP-N-acetyl-alpha-D-glucosamine: step 6/6. In terms of biological role, transfers the gamma-phosphate of ATP to the 4'-position of a tetraacyldisaccharide 1-phosphate intermediate (termed DS-1-P) to form tetraacyldisaccharide 1,4'-bis-phosphate (lipid IVA). This chain is Tetraacyldisaccharide 4'-kinase, found in Aromatoleum aromaticum (strain DSM 19018 / LMG 30748 / EbN1) (Azoarcus sp. (strain EbN1)).